Consider the following 467-residue polypeptide: UDP-glycosyltransferase 71D1 (467 aa).

H16 serves as the catalytic Proton acceptor. An anthocyanidin is bound at residue H16. D122 (charge relay) is an active-site residue. UDP-alpha-D-glucose contacts are provided by T144, Q341, H356, W359, N360, S361, and E364. Residue A379 coordinates an anthocyanidin. The UDP-alpha-D-glucose site is built by E380 and Q381.

Belongs to the UDP-glycosyltransferase family.

It carries out the reaction a flavonol + UDP-alpha-D-glucose = a flavonol 3-O-beta-D-glucoside + UDP + H(+). In terms of biological role, possesses quercetin 3-O-glucosyltransferase activity in vitro. This Arabidopsis thaliana (Mouse-ear cress) protein is UDP-glycosyltransferase 71D1 (UGT71D1).